The following is a 73-amino-acid chain: uncharacterized protein (73 aa).

This is an uncharacterized protein from Saccharomyces cerevisiae (strain ATCC 204508 / S288c) (Baker's yeast).